The following is a 109-amino-acid chain: ATPase inhibitor, mitochondrial (109 aa).

The transit peptide at 1-25 directs the protein to the mitochondrion; it reads MAATALAARTRQAVWSVWAMQGRGF. Positions 26 to 52 are disordered; sequence GSESGDNVRSSAGAVRDAGGAFGKREQ. Residues 26 to 52 are N-terminal inhibitory region; the sequence is GSESGDNVRSSAGAVRDAGGAFGKREQ. Residues 69–109 are a coiled coil; the sequence is ALKKHHENEISHHAKEIERLQKEIERHKQSIKKLKQSEDDD. The tract at residues 74–106 is antiparallel alpha-helical coiled coil region; sequence HENEISHHAKEIERLQKEIERHKQSIKKLKQSE. N6-succinyllysine is present on Lys103.

Belongs to the ATPase inhibitor family. Homodimer; represents the active form and is present at a pH value below 6.5. Homotetramer; represents the inactive form and is present at a pH value above 7.0.

The protein resides in the mitochondrion. Endogenous F(1)F(o)-ATPase inhibitor limiting ATP depletion when the mitochondrial membrane potential falls below a threshold and the F(1)F(o)-ATP synthase starts hydrolyzing ATP to pump protons out of the mitochondrial matrix. Required to avoid the consumption of cellular ATP when the F(1)F(o)-ATP synthase enzyme acts as an ATP hydrolase. Indirectly acts as a regulator of heme synthesis in erythroid tissues: regulates heme synthesis by modulating the mitochondrial pH and redox potential, allowing FECH to efficiently catalyze the incorporation of iron into protoporphyrin IX to produce heme. The polypeptide is ATPase inhibitor, mitochondrial (Bos taurus (Bovine)).